A 197-amino-acid polypeptide reads, in one-letter code: Recombination protein RecR (197 aa).

A C4-type zinc finger spans residues 54-69 (CQQCNNYTEQTLCTLC). A Toprim domain is found at 77–172 (TLLCVVESPA…NISQLAHGIP (96 aa)).

The protein belongs to the RecR family.

Functionally, may play a role in DNA repair. It seems to be involved in an RecBC-independent recombinational process of DNA repair. It may act with RecF and RecO. The protein is Recombination protein RecR of Legionella pneumophila (strain Paris).